Consider the following 51-residue polypeptide: Insulin (51 aa).

3 cysteine pairs are disulfide-bonded: Cys8–Cys37, Cys20–Cys50, and Cys36–Cys41.

This sequence belongs to the insulin family. Heterodimer of a B chain and an A chain linked by two disulfide bonds.

It localises to the secreted. Insulin decreases blood glucose concentration. It increases cell permeability to monosaccharides, amino acids and fatty acids. It accelerates glycolysis, the pentose phosphate cycle, and glycogen synthesis in liver. This chain is Insulin (ins), found in Platichthys flesus (European flounder).